Reading from the N-terminus, the 580-residue chain is E3 ubiquitin-protein ligase TRIM45 (580 aa).

The RING-type zinc finger occupies 29–98 (CPLCLGLFKA…QIGILCPVCD (70 aa)). 2 consecutive B box-type zinc fingers follow at residues 130–176 (GQGL…MVDL) and 186–227 (GKPI…CDFT). 8 residues coordinate Zn(2+): C135, C138, C158, H162, C191, H194, C214, and H219. A coiled-coil region spans residues 281–335 (SEGYIKAIEEHRDKLLKQLEDIRAQKENSLQLQKAQLEQLLADMRTGVEFTEHLL). The stretch at 394–497 (TKEVDPAKCV…VQGSPFTVMV (104 aa)) is one Filamin repeat.

This sequence belongs to the TRIM/RBCC family. In terms of tissue distribution, expressed in skeletal muscle, brain, heart and pancreas.

It is found in the cytoplasm. Its subcellular location is the nucleus. It catalyses the reaction S-ubiquitinyl-[E2 ubiquitin-conjugating enzyme]-L-cysteine + [acceptor protein]-L-lysine = [E2 ubiquitin-conjugating enzyme]-L-cysteine + N(6)-ubiquitinyl-[acceptor protein]-L-lysine.. In terms of biological role, E3 ubiquitin-protein ligase that plays a role in the regulation of inflammatory response. Mechanistically, mediates the 'Lys-48'-linked polyubiquitination of TAB2, a regulatory protein of the kinase TAK1, leading to its degradation via the proteasomal pathway and inhibition of the TLR-mediated inflammatory immune response. May act as a transcriptional repressor in mitogen-activated protein kinase signaling pathway. In Homo sapiens (Human), this protein is E3 ubiquitin-protein ligase TRIM45 (TRIM45).